Consider the following 262-residue polypeptide: uncharacterized protein (262 aa).

A coiled-coil region spans residues 41–118 (ELQKNEKIDK…EEKAEDFINK (78 aa)).

This is an uncharacterized protein from Plasmodium falciparum (isolate 3D7).